We begin with the raw amino-acid sequence, 135 residues long: uncharacterized protein (135 aa).

The tract at residues 56 to 135 (VQSHNRGINN…QKGQLKIEKV (80 aa)) is disordered. Residues 64–74 (NNRRRDQKRKQ) show a composition bias toward basic residues. Residues 77–89 (SIKQDNDLNVSSE) show a composition bias toward polar residues. The span at 108–135 (YKETPDLDEPGSREKRVSQKGQLKIEKV) shows a compositional bias: basic and acidic residues.

This is an uncharacterized protein from Schizosaccharomyces pombe (strain 972 / ATCC 24843) (Fission yeast).